Consider the following 301-residue polypeptide: Acetyl-coenzyme A carboxylase carboxyl transferase subunit beta (301 aa).

In terms of domain architecture, CoA carboxyltransferase N-terminal spans leucine 25 to alanine 294.

This sequence belongs to the AccD/PCCB family. Acetyl-CoA carboxylase is a heterohexamer composed of biotin carboxyl carrier protein (AccB), biotin carboxylase (AccC) and two subunits each of ACCase subunit alpha (AccA) and ACCase subunit beta (AccD).

The protein localises to the cytoplasm. It carries out the reaction N(6)-carboxybiotinyl-L-lysyl-[protein] + acetyl-CoA = N(6)-biotinyl-L-lysyl-[protein] + malonyl-CoA. It participates in lipid metabolism; malonyl-CoA biosynthesis; malonyl-CoA from acetyl-CoA: step 1/1. In terms of biological role, component of the acetyl coenzyme A carboxylase (ACC) complex. Biotin carboxylase (BC) catalyzes the carboxylation of biotin on its carrier protein (BCCP) and then the CO(2) group is transferred by the transcarboxylase to acetyl-CoA to form malonyl-CoA. The sequence is that of Acetyl-coenzyme A carboxylase carboxyl transferase subunit beta from Rhizobium leguminosarum bv. trifolii (strain WSM1325).